The sequence spans 378 residues: Dual-specificity RNA methyltransferase RlmN (378 aa).

Glu-96 (proton acceptor) is an active-site residue. The 239-residue stretch at 102 to 340 folds into the Radical SAM core domain; sequence DNGRGTLCVS…ATVRTTRGDD (239 aa). A disulfide bridge connects residues Cys-109 and Cys-345. [4Fe-4S] cluster-binding residues include Cys-116, Cys-120, and Cys-123. S-adenosyl-L-methionine-binding positions include 170 to 171, Ser-202, 224 to 226, and Asn-302; these read GE and SLH. Cys-345 (S-methylcysteine intermediate) is an active-site residue.

It belongs to the radical SAM superfamily. RlmN family. Requires [4Fe-4S] cluster as cofactor.

It is found in the cytoplasm. The enzyme catalyses adenosine(2503) in 23S rRNA + 2 reduced [2Fe-2S]-[ferredoxin] + 2 S-adenosyl-L-methionine = 2-methyladenosine(2503) in 23S rRNA + 5'-deoxyadenosine + L-methionine + 2 oxidized [2Fe-2S]-[ferredoxin] + S-adenosyl-L-homocysteine. It carries out the reaction adenosine(37) in tRNA + 2 reduced [2Fe-2S]-[ferredoxin] + 2 S-adenosyl-L-methionine = 2-methyladenosine(37) in tRNA + 5'-deoxyadenosine + L-methionine + 2 oxidized [2Fe-2S]-[ferredoxin] + S-adenosyl-L-homocysteine. Functionally, specifically methylates position 2 of adenine 2503 in 23S rRNA and position 2 of adenine 37 in tRNAs. m2A2503 modification seems to play a crucial role in the proofreading step occurring at the peptidyl transferase center and thus would serve to optimize ribosomal fidelity. This Hahella chejuensis (strain KCTC 2396) protein is Dual-specificity RNA methyltransferase RlmN.